The sequence spans 340 residues: GTPase Obg (340 aa).

The Obg domain maps to 1 to 161 (MKFVDMTNIT…QHLLLELLLI (161 aa)). The OBG-type G domain occupies 162 to 335 (ANVGIFGLPN…LCNSIMKFIM (174 aa)). GTP contacts are provided by residues 168 to 175 (GLPNSGKS), 193 to 197 (FTTLV), 215 to 218 (DIPG), 285 to 288 (NKID), and 316 to 318 (SSI). Positions 175 and 195 each coordinate Mg(2+).

This sequence belongs to the TRAFAC class OBG-HflX-like GTPase superfamily. OBG GTPase family. Monomer. It depends on Mg(2+) as a cofactor.

Its subcellular location is the cytoplasm. Its function is as follows. An essential GTPase which binds GTP, GDP and possibly (p)ppGpp with moderate affinity, with high nucleotide exchange rates and a fairly low GTP hydrolysis rate. Plays a role in control of the cell cycle, stress response, ribosome biogenesis and in those bacteria that undergo differentiation, in morphogenesis control. This is GTPase Obg from Blochmanniella pennsylvanica (strain BPEN).